Consider the following 177-residue polypeptide: Retrograde regulation protein 1 (177 aa).

Residues 1-24 are disordered; the sequence is MSSIPAGTDPGSCGANFKNDRKRR. One can recognise a bHLH domain in the interval 11–96; that stretch reads GSCGANFKND…TQAVEYISHL (86 aa). A phosphoserine mark is found at serine 50 and serine 52. 2 disordered regions span residues 52 to 82 and 147 to 177; these read SNDT…KPNK and LAAT…GNGS. The residue at position 60 (threonine 60) is a Phosphothreonine. A compositionally biased stretch (gly residues) spans 168 to 177; sequence GGYGEYGNGS.

Binds DNA as a heterodimer with RTG3.

The protein resides in the nucleus. Its function is as follows. Required for a novel path of interorganelle communication between mitochondria, peroxisomes and the nucleus, thereby maintaining a functional metabolic interaction between the tricarboxylic acid and glyoxylate cycles. Transcription factor that regulates CIT2 gene expression. Binds to two identical sites oriented as inverted repeats 28 bp apart in a regulatory upstream activation sequence element (UASR) in the CIT2 promoter. The core binding site is 5'-GGTCAC-3'. The chain is Retrograde regulation protein 1 (RTG1) from Saccharomyces cerevisiae (strain ATCC 204508 / S288c) (Baker's yeast).